The sequence spans 570 residues: Urease subunit alpha (570 aa).

Positions 137, 139, and 220 each coordinate Ni(2+). Position 220 is an N6-carboxylysine (Lys220). His222 lines the substrate pocket. Ni(2+)-binding residues include His249 and His275. Residue His323 is the Proton donor of the active site. Asp363 lines the Ni(2+) pocket.

It belongs to the metallo-dependent hydrolases superfamily. Urease alpha subunit family. In terms of assembly, heterotrimer of UreA (gamma), UreB (beta) and UreC (alpha) subunits. Three heterotrimers associate to form the active enzyme. Ni cation serves as cofactor. Post-translationally, carboxylation allows a single lysine to coordinate two nickel ions.

It localises to the cytoplasm. The enzyme catalyses urea + 2 H2O + H(+) = hydrogencarbonate + 2 NH4(+). It participates in nitrogen metabolism; urea degradation; CO(2) and NH(3) from urea (urease route): step 1/1. The chain is Urease subunit alpha from Lachnoclostridium phytofermentans (strain ATCC 700394 / DSM 18823 / ISDg) (Clostridium phytofermentans).